A 328-amino-acid polypeptide reads, in one-letter code: uncharacterized protein (328 aa).

This is an uncharacterized protein from Bacillus anthracis.